Reading from the N-terminus, the 95-residue chain is Small ribosomal subunit protein bS6 (95 aa).

This sequence belongs to the bacterial ribosomal protein bS6 family.

Its function is as follows. Binds together with bS18 to 16S ribosomal RNA. The polypeptide is Small ribosomal subunit protein bS6 (Onion yellows phytoplasma (strain OY-M)).